The sequence spans 1002 residues: MDTSMPNQPKFLPRIEHNSSGATANSYVATASGNPFETDEEDEIFSRHKMVLRVPSNCTGDLMHLAVSRNWLVCLLGTPERTTLLRFFLPRAIPPGEAVLEKYLSGSGYKITRMFLDPTGHHIIIALVPKSATAGVSPDFLYIHCLESPQAQQLKVRRIEKFKDHEITAVAFNPYHGNESSTGPILLGTSRGLIFETELNPAADGHVQRKQLYDLGLGRPKYPITGLKLLRVPNSSRYIIVVTSPECIYTFQETLKAEERSLQAIFAGYVSGVQEPHCEERKTDLTFSQLRFFAPPNSKYPKQWAWLCGEGIRVGELSIEANSAATLIGNTLINLDFEKTMHLSYGERRLNTPKAFVLTEYHAVLLYADHVRAICLLNQEQVYQEAFDEARVGKPLSIERDELTGSIYVYTVKTVFNLRVTREERNVWRIYLDKGQYELATAHAAEDPEHLQLVLCQRADAAFADGSYQVAADYYAETDKSFEEVCLKFMVLPDKRPIINYVKKRLSRVTTKPMETDELDEDKMNIIKALVIWLIDLYLIQINMPDKDEEWRSSWQTEYDEFMMEAHVLSCTRQNRETVRQLIAEHADPRNMAQFAIAIGDYDEVVAQQLKAECYAEALQTLINQRNPELFYKYAPELITRLPKPTVDALMAQGSRLEVEKLVPTLIIMENREQREQTQRYLEFAIYKLNTTNDAIHNFLLHLYAEHEPKLLMKYLEIQGRDESLVHYDIYYAHKVCTDLDVKEARVFLECMLRKWISAVDLALTFDMKLAKETASRPSDSKIRRKLWLRIAYHDIKGTNDVKKALNLLKECDLLRIEDLLPFFADFEKIDNFKEAICDALRDYNQRIQELQREMAETTEQTDRVTAELQQLRQHSLTVESQDTCEICEMMLLVKPFFIFICGHKFHSDCLEKHVVPLLTKEQCRRLGTLKQQLEAEVQTQAQPQSGALSKQQAMELQRKRAALKTEIEDILAADCLFCGLLISTIDQPFVDDWEQVNVEWE.

Residue Ser344 is modified to Phosphoserine. One copy of the CHCR repeat lies at Leu650–Lys804. The stretch at Phe827–Glu880 forms a coiled coil. Residues Cys885–Cys924 form an RING-type; degenerate zinc finger.

The protein belongs to the VPS18 family. Component of the class C core vacuole/endosome tethering (CORVET) complex composed of at least Vps8, dor/Vps18, car/Vps33A and Vps16A; unlike in other species, Vps11 is not part of the Drosophila complex. Due to the reduced number of components the Drosophila CORVET complex is often referred to as the miniCORVET complex. Interacts with car/Vps33A. Interacts with ema. Component of the homotypic fusion and vacuole protein sorting (HOPS) complex, composed of Vps16A, car/Vps33A, dor/Vps18, Vps39, Vps11 and lt/Vps41. The tethering complex core made up of Vps16A, car/Vps33A and dor/Vps18 and shared by both HOPS and CORVET, preferentially associates with CORVET-specific Vps8 over HOPS-specific lt/Vps41. Interacts with Syx17 (via SNARE domain); the interaction may involve multiple components of the HOPS complex and may promote assembly of the Syx17-Snap29-Vamp7 trans-SNARE complex.

It localises to the early endosome. It is found in the late endosome membrane. Its subcellular location is the lysosome membrane. The protein resides in the cytoplasmic vesicle. The protein localises to the autophagosome. Its function is as follows. Core component of the class C core vacuole/endosome tethering (CORVET) and the homotypic fusion and vacuole protein sorting (HOPS) tethering complexes involved in endo-lysosomal vesicle trafficking and lysosome biogenesis. The CORVET complex facilitates docking and fusion of endosomal vesicles during endosome maturation, acts upstream of HOPS, but is not involved in autophagic flux. The CORVET complex may cooperate with the early endosomal tether Rbsn-5 to mediate endosomal fusion. The HOPS complex facilitates docking and fusion of lysosomes with late endosomes and several other types of vesicles. The HOPS complex is also involved in autophagy and crinophagy (the elimination of unused secretory granules through their fusion with lysosomes). The HOPS complex mediates autophagocitic flux, probably by binding autophagosome-associated Syx17/syntaxin 17, promoting assembly of the trans-SNARE complex and instigating autophagosome-lysosome fusion. Independent of Syx17/syntaxin 17, HOPS is involved in biosynthetic transport to lysosomes and lysosome-related organelles such as eye-pigment granules. Required for endocytic degradation of boss/bride of sevenless and N/Notch in developing ommatidia. Required for autophagocytosis-dependent remodeling of myofibrils and transverse-tubules (T-tubules) during metamorphosis. In larval neuromuscular junctions, essential for endosomal sorting that traffics old or dysfunctional synaptic vesicle proteins through a degradative endolysosomal route. Required to maintain normal levels of rush, which functions in endosome formation and trafficking. The sequence is that of Vacuolar protein sorting-associated protein 18 homolog from Drosophila melanogaster (Fruit fly).